Here is a 240-residue protein sequence, read N- to C-terminus: NADH-quinone oxidoreductase subunit C (240 aa).

Residues 1 to 82 are disordered; it reads MSEEEKPKPK…PVDENRDPEP (82 aa). The span at 11–20 shows a compositional bias: low complexity; the sequence is LSPALAAKMA. Over residues 67–82 the composition is skewed to basic and acidic residues; sequence DKPKAEPVDENRDPEP.

This sequence belongs to the complex I 30 kDa subunit family. As to quaternary structure, NDH-1 is composed of 14 different subunits. Subunits NuoB, C, D, E, F, and G constitute the peripheral sector of the complex.

It localises to the cell inner membrane. The catalysed reaction is a quinone + NADH + 5 H(+)(in) = a quinol + NAD(+) + 4 H(+)(out). In terms of biological role, NDH-1 shuttles electrons from NADH, via FMN and iron-sulfur (Fe-S) centers, to quinones in the respiratory chain. The immediate electron acceptor for the enzyme in this species is believed to be a menaquinone. Couples the redox reaction to proton translocation (for every two electrons transferred, four hydrogen ions are translocated across the cytoplasmic membrane), and thus conserves the redox energy in a proton gradient. This chain is NADH-quinone oxidoreductase subunit C, found in Chloroherpeton thalassium (strain ATCC 35110 / GB-78).